The chain runs to 565 residues: Phosphomethylpyrimidine synthase (565 aa).

Substrate-binding positions include Asn-203, Met-232, Tyr-261, His-297, 317–319 (SRG), 358–361 (DGLR), and Glu-397. His-401 lines the Zn(2+) pocket. Tyr-424 provides a ligand contact to substrate. His-465 contributes to the Zn(2+) binding site. The [4Fe-4S] cluster site is built by Cys-541, Cys-544, and Cys-549.

The protein belongs to the ThiC family. It depends on [4Fe-4S] cluster as a cofactor.

The enzyme catalyses 5-amino-1-(5-phospho-beta-D-ribosyl)imidazole + S-adenosyl-L-methionine = 4-amino-2-methyl-5-(phosphooxymethyl)pyrimidine + CO + 5'-deoxyadenosine + formate + L-methionine + 3 H(+). Its pathway is cofactor biosynthesis; thiamine diphosphate biosynthesis. In terms of biological role, catalyzes the synthesis of the hydroxymethylpyrimidine phosphate (HMP-P) moiety of thiamine from aminoimidazole ribotide (AIR) in a radical S-adenosyl-L-methionine (SAM)-dependent reaction. This chain is Phosphomethylpyrimidine synthase, found in Bacteroides thetaiotaomicron (strain ATCC 29148 / DSM 2079 / JCM 5827 / CCUG 10774 / NCTC 10582 / VPI-5482 / E50).